We begin with the raw amino-acid sequence, 439 residues long: GTPase Der (439 aa).

2 consecutive EngA-type G domains span residues 4 to 168 (PIVA…KDDE) and 177 to 352 (INIA…DNYT). GTP is bound by residues 10-17 (GRPNVGKS), 57-61 (DTGGI), 120-123 (NKID), 183-190 (GKPNVGKS), 230-234 (DTAGL), and 295-298 (NKWD). One can recognise a KH-like domain in the interval 353 to 437 (KRVKTGVLND…GIKTEFRERK (85 aa)).

Belongs to the TRAFAC class TrmE-Era-EngA-EngB-Septin-like GTPase superfamily. EngA (Der) GTPase family. As to quaternary structure, associates with the 50S ribosomal subunit.

Its function is as follows. GTPase that plays an essential role in the late steps of ribosome biogenesis. In Clostridium botulinum (strain Loch Maree / Type A3), this protein is GTPase Der.